A 1502-amino-acid polypeptide reads, in one-letter code: MSSWLPQNVQKRLLLYVLQQVSLFSNVDLTNLDVSLGSQSQFSFNDIDLNVKEIKLPNVDVLSGKIEKLNLQLAVAGNVDISGEGLTFVLKPIDRFFEDDLSDQWASSLTKSVIDMTKSIMESDVTDSSEHSVEALEEVSKSPTALDSMRNKVLQMALGKLSLKMKRIEFQFLLSTEVTLKFTIDTITLLTVDNKRTVDMGGIEVAFSKTQLSPTNSHQNTDSDVEENENTDSEDAMTASITYSKLEATSIYLSAMESLILESSDDAVQVVLTIDKVNIQFQGVTSINDLKVRDVIIRIDEINIYLRKISPIRKHLLSILRASLDKTSSDGTRTENMRNYKRFQQEQNIKEEEVLTAILLKKVSLHLLDDLELNLIDISLKKSEGFTTSASVFDLKLLYMSNEYFFSSPSAQPLFSMQPDQTTAEKKMFLNRDITLNVDSVLLNELLKLVEEYGSAYNYIQKITRASANQKTAEVLHFKSQSINLKILMNNISLELSMDPIKSTLPHTLFDVEKISLLLIRGDKKVLIGTLSNLIISSKTNGCFHVESFDHKFGAIDINTRTKAVLESLHLFLSQAELELISSNLIAFCGSISSFTNPNTRNNGHENVTKKSVRLLHSSNVMNKRATLSNFVLQVHKAKMTITNTLENTFGDITIEAISCILSQDQNKTLCGIVKEARLQRLYMREKTDIICNVNHDRSKPQLILNMPNSGKPKLYLKGLGLFIDSKWRDLVPSSSKGDIKQERKLTFRTMEVRLYDCSLSLKPYRICTGMVISIPKSIINFSPLGITVSLRSLETLLIDDMKVLKERNTKVLENISLSTWYQKQGYSPLIKVDVLSLHFSNTDSMAVSLKVQKVDVSVCSDSLNALMQTALDLKPAETYPDTLKYQIEPEAVDIFNELCEDFFVTKENPNDKTEDDYETPPVSQGSVNFEEEHFSTERRTVVENDSKSSVFSILTTIKIHIEEVKLKLYDGYEWRHTRKEIKSAVDRIQEDFNDGLELSETKVFDSIYIPAPKDTVENIKDNINRKIHNEETNEGKMKLRPTKKYKVLIKGRDLCIEFKGGQDKIAERASSLSSINDYCILNNTFVKVSDLEIIDNLPTSTWNKFLTRSRSNDKMAQEPAMLVIECSLIRPVPHLYATELICNINIVPLTLHVDQDTLEFLTLFFQFKDNRFELLDEYPDILYIQRLEINSVRLLLDYKPKKVDYAGLKSGKTKEFMNFFILDEARIKLKHVILYGVNGFPQLETILSDIWTPDITKTQIPGILSALTPLKPLAGLSYGARALISVPTEHYQQNGRFGGSLQNGGMVFLKTTGGEVIKLAVRLTSGTQTILENTEKLLGGQGITGRNVPITLVEGDEKVDALIDESLLRSTALFNKEPDNKSNHLDVLLADGNHQKVLSLYADQPKDFNSGLQDAYESMERNLYLTFDSMKKAKKELKTAKGAQEAVSTVAKAAPFVLIRPLIGVTEALSKTLQGLNNQYDEDRIAQIEEKYKSKKQNNNQ.

Residues glutamine 211–aspartate 222 show a composition bias toward polar residues. Positions glutamine 211 to glutamate 234 are disordered. Residues serine 223–glutamate 234 are compositionally biased toward acidic residues.

Belongs to the ATG2 family.

It is found in the preautophagosomal structure membrane. It localises to the endoplasmic reticulum membrane. It carries out the reaction a 1,2-diacyl-sn-glycero-3-phosphocholine(in) = a 1,2-diacyl-sn-glycero-3-phosphocholine(out). The enzyme catalyses a 1,2-diacyl-sn-glycero-3-phospho-L-serine(in) = a 1,2-diacyl-sn-glycero-3-phospho-L-serine(out). The catalysed reaction is a 1,2-diacyl-sn-glycero-3-phosphoethanolamine(in) = a 1,2-diacyl-sn-glycero-3-phosphoethanolamine(out). Functionally, lipid transfer protein required for autophagosome completion and peroxisome degradation. Tethers the edge of the isolation membrane (IM) to the endoplasmic reticulum (ER) and mediates direct lipid transfer from ER to IM for IM expansion. ATG2 binds to the ER exit site (ERES), which is the membrane source for autophagosome formation, using basic residues in its N-terminal region (NR) and to the expanding edge of the IM through its C-terminal region. The latter binding is assisted by an ATG18-PtdIns3P interaction. ATG2 then extracts phospholipids from the membrane source using its NR and transfers them to ATG9 to the IM through its predicted beta-sheet-rich structure for membrane expansion. This chain is Autophagy-related protein 2 (ATG2), found in Kluyveromyces lactis (strain ATCC 8585 / CBS 2359 / DSM 70799 / NBRC 1267 / NRRL Y-1140 / WM37) (Yeast).